Consider the following 736-residue polypeptide: Microtubule-associated protein mu-2 (736 aa).

It belongs to the orthoreovirus mu-2 protein family. As to quaternary structure, interacts with protein mu-NS; in viral inclusions. Interacts with polymerase lambda-3; this interaction stimulates the ATPase activity of mu-2. It depends on a divalent metal cation as a cofactor.

It is found in the virion. Its subcellular location is the host cytoplasm. The protein localises to the host cytoskeleton. Minor inner capsid (core) component. Displays NTPase and RNA 5'-triphosphatase (RTPase) activities. ATP is the preferred substrate for hydrolysis. May function as a cofactor of polymerase lambda-3. Associates with microtubules and plays a role in the formation, structural organization and morphology of viral inclusions, where the assembly of cores and the replication of viral RNA occur. Together with mu-NS, recruits the other core proteins to these inclusions. In Mammalia (T2J), this protein is Microtubule-associated protein mu-2 (M1).